A 993-amino-acid polypeptide reads, in one-letter code: Vinculin (993 aa).

A run of 2 repeats spans residues 258 to 364 (DSDN…TKEI) and 373 to 480 (TNTQ…ELVD). The tract at residues 258 to 480 (DSDNVTVMRK…LRNKLRELVD (223 aa)) is 2 X repeats. The interval 730-797 (ITGAGGSRPP…PPPETDDEEE (68 aa)) is disordered. The span at 758 to 768 (VHDRIYIREDI) shows a compositional bias: basic and acidic residues. A compositionally biased stretch (pro residues) spans 769 to 790 (PTPPRPPPPVEISPPPRPPPPP).

Belongs to the vinculin/alpha-catenin family. In terms of assembly, exhibits self-association properties.

Its subcellular location is the cytoplasm. The protein resides in the cytoskeleton. The protein localises to the cell junction. It localises to the adherens junction. It is found in the cell membrane. Its function is as follows. Involved in cell adhesion. May be involved in the attachment of the actin-based microfilaments to the plasma membrane. This Brugia malayi (Filarial nematode worm) protein is Vinculin.